A 435-amino-acid polypeptide reads, in one-letter code: Probable histidine--tRNA ligase, cytoplasmic (435 aa).

Belongs to the class-II aminoacyl-tRNA synthetase family.

It is found in the cytoplasm. It catalyses the reaction tRNA(His) + L-histidine + ATP = L-histidyl-tRNA(His) + AMP + diphosphate + H(+). The chain is Probable histidine--tRNA ligase, cytoplasmic from Encephalitozoon cuniculi (strain GB-M1) (Microsporidian parasite).